A 240-amino-acid chain; its full sequence is 4-hydroxy-tetrahydrodipicolinate reductase (240 aa).

Residues 79-81 and 103-106 each bind NAD(+); these read ATT and SANM. The Proton donor/acceptor role is filled by histidine 135. Histidine 136 serves as a coordination point for (S)-2,3,4,5-tetrahydrodipicolinate. The Proton donor role is filled by lysine 139. 145 to 146 contacts (S)-2,3,4,5-tetrahydrodipicolinate; the sequence is GT.

This sequence belongs to the DapB family.

It is found in the cytoplasm. The enzyme catalyses (S)-2,3,4,5-tetrahydrodipicolinate + NAD(+) + H2O = (2S,4S)-4-hydroxy-2,3,4,5-tetrahydrodipicolinate + NADH + H(+). The catalysed reaction is (S)-2,3,4,5-tetrahydrodipicolinate + NADP(+) + H2O = (2S,4S)-4-hydroxy-2,3,4,5-tetrahydrodipicolinate + NADPH + H(+). It functions in the pathway amino-acid biosynthesis; L-lysine biosynthesis via DAP pathway; (S)-tetrahydrodipicolinate from L-aspartate: step 4/4. Catalyzes the conversion of 4-hydroxy-tetrahydrodipicolinate (HTPA) to tetrahydrodipicolinate. This Staphylococcus epidermidis (strain ATCC 12228 / FDA PCI 1200) protein is 4-hydroxy-tetrahydrodipicolinate reductase.